The chain runs to 333 residues: CMP-N-acetylneuraminate-beta-galactosamide-alpha-2,3-sialyltransferase 4 (333 aa).

Topologically, residues 1 to 8 (MVSKSRWK) are cytoplasmic. A helical; Signal-anchor for type II membrane protein transmembrane segment spans residues 9-26 (LLAMLALVLVVMVWYSIS). The Lumenal segment spans residues 27–333 (REDRYIELFY…MGAIKNLTSF (307 aa)). Asparagine 61, asparagine 131, asparagine 310, and asparagine 329 each carry an N-linked (GlcNAc...) asparagine glycan. Cysteines 120 and 273 form a disulfide.

It belongs to the glycosyltransferase 29 family. In terms of processing, the soluble form derives from the membrane form by proteolytic processing. In terms of tissue distribution, highly expressed in adult placenta, heart and kidney.

The protein localises to the golgi apparatus. Its subcellular location is the golgi stack membrane. It is found in the secreted. The enzyme catalyses a beta-D-galactosyl-(1-&gt;3)-N-acetyl-beta-D-galactosaminyl derivative + CMP-N-acetyl-beta-neuraminate = an N-acetyl-alpha-neuraminyl-(2-&gt;3)-beta-D-galactosyl-(1-&gt;3)-N-acetyl-beta-D-galactosaminyl derivative + CMP + H(+). The catalysed reaction is a beta-D-galactosyl-(1-&gt;3)-N-acetyl-alpha-D-galactosaminyl derivative + CMP-N-acetyl-beta-neuraminate = an N-acetyl-alpha-neuraminyl-(2-&gt;3)-beta-D-galactosyl-(1-&gt;3)-N-acetyl-alpha-D-galactosaminyl derivative + CMP + H(+). It catalyses the reaction a beta-D-galactosyl-(1-&gt;4)-N-acetyl-beta-D-glucosaminyl derivative + CMP-N-acetyl-beta-neuraminate = an N-acetyl-alpha-neuraminyl-(2-&gt;3)-beta-D-galactosyl-(1-&gt;4)-N-acetyl-beta-D-glucosaminyl derivative + CMP + H(+). It carries out the reaction a ganglioside GM1 (d18:1(4E)) + CMP-N-acetyl-beta-neuraminate = a ganglioside GD1a (d18:1(4E)) + CMP + H(+). The enzyme catalyses a ganglioside GA1 (d18:1(4E)) + CMP-N-acetyl-beta-neuraminate = a ganglioside GM1b (d18:1(4E)) + CMP + H(+). The catalysed reaction is a ganglioside GT1c (d18:1(4E)) + CMP-N-acetyl-beta-neuraminate = a ganglioside GQ1c (d18:1(4E)) + CMP + H(+). It catalyses the reaction a neolactoside nLc4Cer + CMP-N-acetyl-beta-neuraminate = a neolactoside IV(3)-alpha-NeuAc-nLc4Cer + CMP + H(+). It carries out the reaction a neolactoside nLc4Cer(d18:1(4E)) + CMP-N-acetyl-beta-neuraminate = a neolactoside IV(3)-alpha-NeuAc-nLc4Cer(d18:1(4E)) + CMP + H(+). It participates in protein modification; protein glycosylation. Its pathway is glycolipid biosynthesis. In terms of biological role, a beta-galactoside alpha2-3 sialyltransferase involved in terminal sialylation of glycoproteins and glycolipids. Catalyzes the transfer of sialic acid (N-acetyl-neuraminic acid; Neu5Ac) from the nucleotide sugar donor CMP-Neu5Ac onto acceptor Galbeta-(1-&gt;3)-GalNAc- and Galbeta-(1-&gt;4)-GlcNAc-terminated glycoconjugates through an alpha2-3 linkage. Plays a major role in hemostasis. Responsible for sialylation of plasma VWF/von Willebrand factor, preventing its recognition by asialoglycoprotein receptors (ASGPR) and subsequent clearance. Regulates ASGPR-mediated clearance of platelets. Participates in the biosynthesis of the sialyl Lewis X epitopes, both on O- and N-glycans, which are recognized by SELE/E-selectin, SELP/P-selectin and SELL/L-selectin. Essential for selectin-mediated rolling and adhesion of leukocytes during extravasation. Contributes to adhesion and transendothelial migration of neutrophils likely through terminal sialylation of CXCR2. In glycosphingolipid biosynthesis, sialylates GM1 and GA1 gangliosides to form GD1a and GM1b, respectively. Metabolizes brain c-series ganglioside GT1c forming GQ1c. Synthesizes ganglioside LM1 (IV3Neu5Ac-nLc4Cer), a major structural component of peripheral nerve myelin. This is CMP-N-acetylneuraminate-beta-galactosamide-alpha-2,3-sialyltransferase 4 (ST3GAL4) from Homo sapiens (Human).